The primary structure comprises 221 residues: Thymidylate kinase (221 aa).

10 to 17 (GIDGAGKT) is a binding site for ATP.

It belongs to the thymidylate kinase family.

The enzyme catalyses dTMP + ATP = dTDP + ADP. Phosphorylation of dTMP to form dTDP in both de novo and salvage pathways of dTTP synthesis. In Desulforudis audaxviator (strain MP104C), this protein is Thymidylate kinase.